A 127-amino-acid polypeptide reads, in one-letter code: MSLSHGTGAPAISTPLTLRPPPDNTKAILTIAIGIAASLVFFMLTRNNLPHVGDNIHSLPHGGSYIDGTKSINYRPPASRYPSSNLLAFAPPILAAVLFFLTQPYLATRRSRCVRCFVVHGACTNHT.

Over 1–24 (MSLSHGTGAPAISTPLTLRPPPDN) the chain is Cytoplasmic. The helical transmembrane segment at 25-45 (TKAILTIAIGIAASLVFFMLT) threads the bilayer. At 46–85 (RNNLPHVGDNIHSLPHGGSYIDGTKSINYRPPASRYPSSN) the chain is on the lumenal side. Residues 86–106 (LLAFAPPILAAVLFFLTQPYL) traverse the membrane as a helical segment. The Cytoplasmic portion of the chain corresponds to 107-127 (ATRRSRCVRCFVVHGACTNHT).

This sequence belongs to the Tymovirales TGBp2 protein family.

It is found in the host endoplasmic reticulum membrane. Functionally, plays a role in viral cell-to-cell propagation, by facilitating genome transport to neighboring plant cells through plasmosdesmata,. This chain is Movement protein TGB2, found in Setaria italica (Foxtail millet).